The sequence spans 149 residues: Large ribosomal subunit protein uL15 (149 aa).

The segment at 1–57 is disordered; sequence MRLNDPKPKTGSQHRRRRVGRGIAAGQGASCGFGMRGQKSRSGRPTRPGFEGGQNPL. Residues 23–35 are compositionally biased toward gly residues; that stretch reads IAAGQGASCGFGM.

Belongs to the universal ribosomal protein uL15 family. In terms of assembly, part of the 50S ribosomal subunit.

Functionally, binds to the 23S rRNA. The polypeptide is Large ribosomal subunit protein uL15 (Acaryochloris marina (strain MBIC 11017)).